The sequence spans 730 residues: Elongation factor 2 (730 aa).

Positions 19-229 constitute a tr-type G domain; the sequence is LMIRNIGIVA…GVSFSEVFNY (211 aa). GTP is bound by residues 28–35, 94–98, and 148–151; these read AHIDHGKT, DTPGH, and NKVD. Position 596 is a diphthamide (His596).

It belongs to the TRAFAC class translation factor GTPase superfamily. Classic translation factor GTPase family. EF-G/EF-2 subfamily.

It is found in the cytoplasm. Functionally, catalyzes the GTP-dependent ribosomal translocation step during translation elongation. During this step, the ribosome changes from the pre-translocational (PRE) to the post-translocational (POST) state as the newly formed A-site-bound peptidyl-tRNA and P-site-bound deacylated tRNA move to the P and E sites, respectively. Catalyzes the coordinated movement of the two tRNA molecules, the mRNA and conformational changes in the ribosome. The chain is Elongation factor 2 (fusA) from Methanococcoides burtonii (strain DSM 6242 / NBRC 107633 / OCM 468 / ACE-M).